The primary structure comprises 513 residues: Acyltransferase uat1 (513 aa).

Histidine 158 functions as the Proton acceptor in the catalytic mechanism.

The protein belongs to the plant acyltransferase family.

It participates in secondary metabolite biosynthesis. Its function is as follows. Acyltransferase; part of the gene cluster that mediates the biosynthesis of the glycolipid biosurfactant ustilagic acid (UA). UA is a secreted cellobiose glycolipid that is toxic for many microorganisms and confers biocontrol activity to U.maydis. UA consists of 15,16-dihydroxypalmitic or 2,15,16-trihydroxypalmitic acid, which is O-glycosidically linked to cellobiose at its terminal hydroxyl group. In addition, the cellobiose moiety is acetylated and acylated with a short-chain hydroxy fatty acid. UA biosynthesis starts with omega-hydroxylation of palmitic acid catalyzed by the cytochrome P450 monooxygenase cyp1. Terminal hydroxylation of palmitic acid precedes subterminal hydroxylation catalyzed by the cytochrome P450 monooxygenase cyp2. Sequential glucosylation of the hydroxy fatty acid is probably catalyzed by the glycosyltransferase ugt1. The cellobiose lipid is further decorated by acetylation of the proximal glucose residue and by acylation with a short-chain beta-hydroxy fatty acid at the distal glucose residue. The acyltransferase uat1 may be a good candidate for catalyzing either acetylation or acylation of the cellobiose lipid. The fatty acid synthase fas2 may be involved in synthesis of the carbon backbone of the short-chain beta-hydroxy fatty acid esterified to the cellobiose disaccharide. The secreted UA consists of a mixture of both alpha-hydroxylated and non-hydroxylated glycolipids; therefore, alpha-hydroxylation of the long-chain fatty, catalyzed by the fatty acid hydroxylase ahd1, occurs late in UA biosynthesis and may be the last step before secretion. The protein is Acyltransferase uat1 of Mycosarcoma maydis (Corn smut fungus).